Consider the following 236-residue polypeptide: Uridylate kinase (236 aa).

10–13 lines the ATP pocket; the sequence is KLSG. Gly-52 is a binding site for UMP. ATP-binding residues include Gly-53 and Arg-57. UMP-binding positions include Asp-72 and 133–140; that span reads TGNPFFTT. Positions 160, 166, and 169 each coordinate ATP.

The protein belongs to the UMP kinase family. In terms of assembly, homohexamer.

It is found in the cytoplasm. The catalysed reaction is UMP + ATP = UDP + ADP. Its pathway is pyrimidine metabolism; CTP biosynthesis via de novo pathway; UDP from UMP (UMPK route): step 1/1. With respect to regulation, inhibited by UTP. Functionally, catalyzes the reversible phosphorylation of UMP to UDP. The polypeptide is Uridylate kinase (Ralstonia nicotianae (strain ATCC BAA-1114 / GMI1000) (Ralstonia solanacearum)).